The primary structure comprises 434 residues: Putative MgpC-like protein MPN_149 (434 aa).

2 disordered regions span residues 168–193 (GSGQ…PKAV) and 215–267 (EPLD…DNNG). A compositionally biased stretch (polar residues) spans 170 to 184 (GQESSWNSQRSQKVL). Residues 218–229 (DSTKDGKGKDES) are compositionally biased toward basic and acidic residues. Residues 248-267 (STGSQMAAVTDSQQSGDNNG) are compositionally biased toward polar residues.

The protein belongs to the MgpC family.

The protein is Putative MgpC-like protein MPN_149 of Mycoplasma pneumoniae (strain ATCC 29342 / M129 / Subtype 1) (Mycoplasmoides pneumoniae).